Reading from the N-terminus, the 381-residue chain is Alkanesulfonate monooxygenase (381 aa).

This sequence belongs to the SsuD family. Homotetramer.

It carries out the reaction an alkanesulfonate + FMNH2 + O2 = an aldehyde + FMN + sulfite + H2O + 2 H(+). Its function is as follows. Catalyzes the desulfonation of aliphatic sulfonates. The polypeptide is Alkanesulfonate monooxygenase (Escherichia coli O9:H4 (strain HS)).